Consider the following 149-residue polypeptide: Large ribosomal subunit protein bL9 (149 aa).

It belongs to the bacterial ribosomal protein bL9 family.

Binds to the 23S rRNA. This Glaesserella parasuis serovar 5 (strain SH0165) (Haemophilus parasuis) protein is Large ribosomal subunit protein bL9.